The following is a 451-amino-acid chain: Golgi reassembly-stacking protein 2 (451 aa).

Gly-2 carries the N-myristoyl glycine lipid modification. 2 consecutive PDZ GRASP-type domains span residues 15–105 and 111–199; these read EGYH…FCSF and NVWH…YGYL. The interval 15 to 215 is GRASP; the sequence is EGYHVLRVQE…PFEEGKKISL (201 aa). Dimethylated arginine is present on residues Arg-30 and Arg-47. Positions 194–199 are important for membrane binding; it reads IGYGYL. Phosphoserine is present on Ser-214. Thr-222 is subject to Phosphothreonine. Thr-225 is subject to Phosphothreonine; by MAPK. Low complexity predominate over residues 236 to 252; the sequence is LSSVSPPSLSPPGTTGV. 2 disordered regions span residues 236–255 and 377–451; these read LSSVSPPSLSPPGTTGVEQS and EGSS…SEPS. The segment covering 410-424 has biased composition (polar residues); that stretch reads SSLTVDVTSPASKVP. Ser-411 is modified (phosphoserine). A phosphothreonine mark is found at Thr-417 and Thr-435. Residues Ser-443 and Ser-448 each carry the phosphoserine modification.

This sequence belongs to the GORASP family. As to quaternary structure, homodimer. Homooligomer. ER stress induces phosphorylation-dependent monomerization. Interacts with BLZF1/Golgin 45. Identified in a complex with RAB2 and GORASP2. Interacts with JAM2 and JAM3. Interacts with members of the p24 cargo receptors. Interacts with CNIH and the cytoplasmic domain of transmembrane TGFA, prior its transit in the trans-Golgi. Interacts with KCTD5. Interacts with TMED2 and TMED3. Interacts with SEC16A in response to ER stress. Interacts (via PDZ GRASP-type 1 domain) with core-glycosylated CFTR in response to ER stress. Myristoylated. Myristoylation is essential for the Golgi targeting. Post-translationally, palmitoylated. In terms of processing, phosphorylated in mitotic cells. ER stress-induced phosphorylation at Ser-443 induces monomerization and subsequent relocalization from Golgi to ER which is essential for mediating unconventional (ER/Golgi-independent) trafficking of CFTR to the cell membrane. In terms of tissue distribution, detected in lung, heart and testis. Colocalized in a polarized fashion in the acrosome region with JAM3 in round spermatids (at protein level).

Its subcellular location is the golgi apparatus membrane. The protein resides in the endoplasmic reticulum membrane. It localises to the golgi apparatus. Its function is as follows. Key structural protein of the Golgi apparatus. The membrane cisternae of the Golgi apparatus adhere to each other to form stacks, which are aligned side by side to form the Golgi ribbon. Acting in concert with GORASP1/GRASP65, is required for the formation and maintenance of the Golgi ribbon, and may be dispensable for the formation of stacks. However, other studies suggest that GORASP2 plays a role in assembly and membrane stacking of the Golgi cisternae, and in the process by which Golgi stacks reform after breakdown during mitosis and meiosis. May regulate the intracellular transport and presentation of a defined set of transmembrane proteins, such as transmembrane TGFA. Required for normal acrosome formation during spermiogenesis and normal male fertility, probably by promoting colocalization of JAM2 and JAM3 at contact sites between germ cells and Sertoli cells. Mediates ER stress-induced unconventional (ER/Golgi-independent) trafficking of core-glycosylated CFTR to cell membrane. This is Golgi reassembly-stacking protein 2 (Gorasp2) from Mus musculus (Mouse).